A 102-amino-acid chain; its full sequence is Putative pterin-4-alpha-carbinolamine dehydratase (102 aa).

Belongs to the pterin-4-alpha-carbinolamine dehydratase family.

The catalysed reaction is (4aS,6R)-4a-hydroxy-L-erythro-5,6,7,8-tetrahydrobiopterin = (6R)-L-erythro-6,7-dihydrobiopterin + H2O. The sequence is that of Putative pterin-4-alpha-carbinolamine dehydratase from Burkholderia lata (strain ATCC 17760 / DSM 23089 / LMG 22485 / NCIMB 9086 / R18194 / 383).